The chain runs to 569 residues: 2-isopropylmalate synthase (569 aa).

The region spanning 31–305 (PRWMSTDLRD…APELDFSDID (275 aa)) is the Pyruvate carboxyltransferase domain. Mg(2+) contacts are provided by aspartate 40, histidine 244, histidine 246, and asparagine 280. The regulatory domain stretch occupies residues 437-569 (RETPLRYVSH…TASASAATEA (133 aa)).

It belongs to the alpha-IPM synthase/homocitrate synthase family. LeuA type 2 subfamily. As to quaternary structure, homodimer. Mg(2+) is required as a cofactor.

Its subcellular location is the cytoplasm. It carries out the reaction 3-methyl-2-oxobutanoate + acetyl-CoA + H2O = (2S)-2-isopropylmalate + CoA + H(+). It participates in amino-acid biosynthesis; L-leucine biosynthesis; L-leucine from 3-methyl-2-oxobutanoate: step 1/4. Catalyzes the condensation of the acetyl group of acetyl-CoA with 3-methyl-2-oxobutanoate (2-ketoisovalerate) to form 3-carboxy-3-hydroxy-4-methylpentanoate (2-isopropylmalate). The polypeptide is 2-isopropylmalate synthase (Cupriavidus taiwanensis (strain DSM 17343 / BCRC 17206 / CCUG 44338 / CIP 107171 / LMG 19424 / R1) (Ralstonia taiwanensis (strain LMG 19424))).